Consider the following 201-residue polypeptide: Recombination protein RecR (201 aa).

The segment at 57 to 72 (CADCRTFTEQDVCNIC) adopts a C4-type zinc-finger fold. Positions 81–176 (GQICVVESPA…EASRIAHGVP (96 aa)) constitute a Toprim domain.

This sequence belongs to the RecR family.

In terms of biological role, may play a role in DNA repair. It seems to be involved in an RecBC-independent recombinational process of DNA repair. It may act with RecF and RecO. The chain is Recombination protein RecR from Salmonella agona (strain SL483).